The following is a 269-amino-acid chain: Formamidopyrimidine-DNA glycosylase (269 aa).

The Schiff-base intermediate with DNA role is filled by Pro-2. Glu-3 functions as the Proton donor in the catalytic mechanism. Lys-57 (proton donor; for beta-elimination activity) is an active-site residue. The DNA site is built by His-90, Arg-109, and Lys-150. The FPG-type zinc finger occupies 235–269; it reads QVYGKGGLPCPKCGTELAEVKIGQRATVYCSQCQQ. Residue Arg-259 is the Proton donor; for delta-elimination activity of the active site.

The protein belongs to the FPG family. In terms of assembly, monomer. Zn(2+) is required as a cofactor.

The catalysed reaction is Hydrolysis of DNA containing ring-opened 7-methylguanine residues, releasing 2,6-diamino-4-hydroxy-5-(N-methyl)formamidopyrimidine.. It catalyses the reaction 2'-deoxyribonucleotide-(2'-deoxyribose 5'-phosphate)-2'-deoxyribonucleotide-DNA = a 3'-end 2'-deoxyribonucleotide-(2,3-dehydro-2,3-deoxyribose 5'-phosphate)-DNA + a 5'-end 5'-phospho-2'-deoxyribonucleoside-DNA + H(+). Its function is as follows. Involved in base excision repair of DNA damaged by oxidation or by mutagenic agents. Acts as a DNA glycosylase that recognizes and removes damaged bases. Has a preference for oxidized purines, such as 7,8-dihydro-8-oxoguanine (8-oxoG). Has AP (apurinic/apyrimidinic) lyase activity and introduces nicks in the DNA strand. Cleaves the DNA backbone by beta-delta elimination to generate a single-strand break at the site of the removed base with both 3'- and 5'-phosphates. The chain is Formamidopyrimidine-DNA glycosylase from Photobacterium damsela subsp. piscicida (Pasteurella piscicida).